Consider the following 450-residue polypeptide: 3',5'-cyclic-AMP phosphodiesterase 7B (450 aa).

The region spanning 97 to 420 is the PDEase domain; sequence LDEDYLGQAR…AQWKSLLPRQ (324 aa). His173 acts as the Proton donor in catalysis. A divalent metal cation-binding residues include His177, His213, Asp214, and Asp323. Residues 418-450 are disordered; sequence PRQHRSRGSSGSGPDHDHAGQGTESEEQEGDSP. The residue at position 426 (Ser426) is a Phosphoserine. A compositionally biased stretch (acidic residues) spans 441–450; it reads ESEEQEGDSP.

Belongs to the cyclic nucleotide phosphodiesterase family. PDE7 subfamily. A divalent metal cation is required as a cofactor. As to expression, highly expressed in brain. Also expressed in heart, liver, skeletal muscle and pancreas.

It carries out the reaction 3',5'-cyclic AMP + H2O = AMP + H(+). The protein operates within purine metabolism; 3',5'-cyclic AMP degradation; AMP from 3',5'-cyclic AMP: step 1/1. Its activity is regulated as follows. Inhibited by dipyridamole, IBMX and SCH 51866. Insensitive to zaprinast, rolipram, and milrinone. Its function is as follows. Hydrolyzes the second messenger cAMP, which is a key regulator of many important physiological processes. May be involved in the control of cAMP-mediated neural activity and cAMP metabolism in the brain. The polypeptide is 3',5'-cyclic-AMP phosphodiesterase 7B (Homo sapiens (Human)).